The following is a 448-amino-acid chain: MTTPTAIRRLDAADPDFARHLDHLLSWESVSDDSVNQRVLDIIKAVRERGDEALVEFTQKFDGLQVASMADLILPRERLELALTRITPVQREALEKAAERVRSYHEKQKQDSWSYTEADGTVLGQKVTPLDRAGLYVPGGKASYPSSVLMNAIPAKVAGVTEVVMVVPTPRGEINELVLAAACIAGVDRVFTIGGAQAVAALAYGTESVPKVDKVVGPGNIYVATAKRHVFGQVGIDMIAGPSEILVVCDGQTDPDWIAMDLFSQAEHDEDAQAILVSPDADFLDKVAASITRLLPTMERAAIVETSINGRGALIKVADMAQAIEVANRIAPEHLELSVADPEAWLPQIRHAGAIFMGRHTSEALGDYCAGPNHVLPTSGTARFSSPLGVYDFQKRSSIIYCSPQGASELGKTASVLARGESLSGHARSAEYRITDPDWKAGNTEDGK.

Tyrosine 136, glutamine 197, and asparagine 220 together coordinate NAD(+). Residues serine 243, glutamine 265, and histidine 268 each coordinate substrate. Zn(2+) contacts are provided by glutamine 265 and histidine 268. Catalysis depends on proton acceptor residues glutamate 333 and histidine 334. Substrate-binding residues include histidine 334, aspartate 367, glutamate 421, and histidine 426. A Zn(2+)-binding site is contributed by aspartate 367. Position 426 (histidine 426) interacts with Zn(2+).

The protein belongs to the histidinol dehydrogenase family. Requires Zn(2+) as cofactor.

The enzyme catalyses L-histidinol + 2 NAD(+) + H2O = L-histidine + 2 NADH + 3 H(+). It participates in amino-acid biosynthesis; L-histidine biosynthesis; L-histidine from 5-phospho-alpha-D-ribose 1-diphosphate: step 9/9. Functionally, catalyzes the sequential NAD-dependent oxidations of L-histidinol to L-histidinaldehyde and then to L-histidine. This is Histidinol dehydrogenase from Pseudomonas savastanoi pv. phaseolicola (strain 1448A / Race 6) (Pseudomonas syringae pv. phaseolicola (strain 1448A / Race 6)).